Reading from the N-terminus, the 189-residue chain is Chitin synthase 1 (189 aa).

The protein belongs to the chitin synthase family. Class I subfamily.

It localises to the cell membrane. The catalysed reaction is [(1-&gt;4)-N-acetyl-beta-D-glucosaminyl](n) + UDP-N-acetyl-alpha-D-glucosamine = [(1-&gt;4)-N-acetyl-beta-D-glucosaminyl](n+1) + UDP + H(+). Its function is as follows. Polymerizes chitin, a structural polymer of the cell wall and septum, by transferring the sugar moiety of UDP-GlcNAc to the non-reducing end of the growing chitin polymer. In Aspergillus niger, this protein is Chitin synthase 1 (chs1).